We begin with the raw amino-acid sequence, 159 residues long: Defense protein l(2)34Fc (159 aa).

An N-terminal signal peptide occupies residues 1 to 17 (MFRLLVLAACLAISVHA). The region spanning 18–159 (YSDGAPKAAC…GRVTKDIDVE (142 aa)) is the Reelin domain. The cysteines at positions 27 and 99 are disulfide-linked.

The protein belongs to the insect defense protein family.

It localises to the secreted. Functionally, may have antimicrobial activity. A late response immune regulated gene that is negatively regulated by spz during the immune response. In Drosophila melanogaster (Fruit fly), this protein is Defense protein l(2)34Fc (l(2)34Fc).